The sequence spans 163 residues: MDEKREENILKKQEELRLFQEALPRKGRLAGLDVGTKTIGLALCDSQWIIASPAETIRRKKFTLDLELLRQFVEKQQVKGLVIGLPLNLDGSDSPRTQSVRAFAKNVAPLSLPVLMWDERWSTKAVTRTLLEADASRARRSEVVDKMAAAYILQGAIDSFAMF.

Belongs to the YqgF nuclease family.

The protein localises to the cytoplasm. Could be a nuclease involved in processing of the 5'-end of pre-16S rRNA. The sequence is that of Putative pre-16S rRNA nuclease from Zymomonas mobilis subsp. mobilis (strain ATCC 31821 / ZM4 / CP4).